Reading from the N-terminus, the 1358-residue chain is Tenascin-R (1358 aa).

Residues 1-31 (MGADGETVVLKNMLIGINLILLGSMIKPSEC) form the signal peptide. Residues Thr36 and Thr37 are each glycosylated (O-linked (GalNAc...) threonine). The N-linked (GlcNAc...) asparagine glycan is linked to Asn55. Positions 127–157 (CASSAQVLQELLSRIEMLEREVSVLRDQCNA) form a coiled coil. Ser176 carries an O-linked (Xyl...) (chondroitin sulfate) serine glycan. Asn180 and Asn198 each carry an N-linked (GlcNAc...) asparagine glycan. 3 EGF-like domains span residues 188-199 (CICNEGWFGKNC), 219-230 (CICDSEYSGDDC), and 250-261 (CVCEEPYTGEDC). Residue Ser271 is glycosylated (O-linked (Xyl...) (chondroitin sulfate) serine). N-linked (GlcNAc...) asparagine glycosylation is present at Asn278. An EGF-like 4 domain is found at 281 to 292 (CLCEEGYVGEDC). Intrachain disulfides connect Cys292/Cys301, Cys297/Cys312, and Cys314/Cys323. Ser302 carries an O-linked (Xyl...) (chondroitin sulfate) serine glycan. In terms of domain architecture, EGF-like 5 spans 312-323 (CVCEEGYQGPDC). Fibronectin type-III domains are found at residues 328-420 (PPED…TPQG), 421-505 (LQFK…TVID), 506-595 (GPTQ…TEID), 596-687 (APKN…TELD), 688-777 (SPRD…FRPI), 778-865 (SHLH…TGID), 866-955 (PPKD…AMDN), 956-1042 (PVDL…TLLD), and 1043-1130 (PPAN…TGGR). Asn392, Asn470, and Asn581 each carry an N-linked (GlcNAc...) asparagine glycan. Ser724 carries the phosphoserine modification. Residues Asn791, Asn874, Asn1036, Asn1046, and Asn1261 are each glycosylated (N-linked (GlcNAc...) asparagine). In terms of domain architecture, Fibrinogen C-terminal spans 1129-1344 (GRVFPHPQDC…FVEMKMRPYN (216 aa)).

Belongs to the tenascin family. In terms of assembly, forms oligomers. Interacts with CNTN1, TNC, and FN1. Interacts with BCAN and ACAN in a calcium-dependent manner. Interacts with SCN2B, PTPRZ1, and CSPG3. Post-translationally, contains N-linked oligosaccharides, O-linked sialylated structures and O-linked chondroitin sulfate glycosaminoglycans. Contains N-linked oligosaccharides with a sulfated carbohydrate structure. O-glycosylated on Thr-36 or Thr-37 with a core 1 or possibly core 8 glycan. As to expression, brain specific.

It localises to the secreted. The protein resides in the extracellular space. Its subcellular location is the extracellular matrix. Neural extracellular matrix (ECM) protein involved in interactions with different cells and matrix components. These interactions can influence cellular behavior by either evoking a stable adhesion and differentiation, or repulsion and inhibition of neurite growth. Binding to cell surface gangliosides inhibits RGD-dependent integrin-mediated cell adhesion and results in an inhibition of PTK2/FAK1 (FAK) phosphorylation and cell detachment. Binding to membrane surface sulfatides results in a oligodendrocyte adhesion and differentiation. Interaction with CNTN1 induces a repulsion of neurons and an inhibition of neurite outgrowth. Interacts with SCN2B may play a crucial role in clustering and regulation of activity of sodium channels at nodes of Ranvier. TNR-linked chondroitin sulfate glycosaminoglycans are involved in the interaction with FN1 and mediate inhibition of cell adhesion and neurite outgrowth. The highly regulated addition of sulfated carbohydrate structure may modulate the adhesive properties of TNR over the course of development and during synapse maintenance. The protein is Tenascin-R (TNR) of Homo sapiens (Human).